The sequence spans 288 residues: MSLSGRERPAWPGSRLSWLLCCSALLSPAAGYVIVSSVSWAVTNEVDEELDSASTEEALPALLEDSSSIWQQSFPASAHKEDTHLRPRGSARARPAPAARGMFSYRRESGSSEASPGPRVHAGTARSLAHASSWGCLATVSTHEKIQGLPFGSCLAISDGPVHNSTGIPFFYMTAKDPAVADLVKNPTASLVLPESEGEFCRKNIVDPEDPRCARLTLTGRMVTVPPGEVEFAKQAMFSRHPGMRKWPRQYEWFFMKMWVEHIWLQKWYGGVSDIPREEYFKAAPRKA.

The signal sequence occupies residues 1–31 (MSLSGRERPAWPGSRLSWLLCCSALLSPAAG). The interval 78–100 (AHKEDTHLRPRGSARARPAPAAR) is disordered. N-linked (GlcNAc...) asparagine glycosylation is present at Asn-164.

Belongs to the CREG family. In terms of tissue distribution, brain specific.

The protein localises to the secreted. This Mus musculus (Mouse) protein is Protein CREG2 (Creg2).